The following is a 1415-amino-acid chain: DNA-directed RNA polymerase subunit beta' (1415 aa).

Zn(2+) contacts are provided by Cys-72, Cys-74, Cys-87, and Cys-90. The Mg(2+) site is built by Asp-463, Asp-465, and Asp-467. Residues Cys-811, Cys-885, Cys-892, and Cys-895 each coordinate Zn(2+).

This sequence belongs to the RNA polymerase beta' chain family. In terms of assembly, the RNAP catalytic core consists of 2 alpha, 1 beta, 1 beta' and 1 omega subunit. When a sigma factor is associated with the core the holoenzyme is formed, which can initiate transcription. Mg(2+) is required as a cofactor. Requires Zn(2+) as cofactor.

It carries out the reaction RNA(n) + a ribonucleoside 5'-triphosphate = RNA(n+1) + diphosphate. In terms of biological role, DNA-dependent RNA polymerase catalyzes the transcription of DNA into RNA using the four ribonucleoside triphosphates as substrates. This is DNA-directed RNA polymerase subunit beta' from Cereibacter sphaeroides (strain ATCC 17025 / ATH 2.4.3) (Rhodobacter sphaeroides).